Here is a 516-residue protein sequence, read N- to C-terminus: D-aminopeptidase (516 aa).

The active-site Nucleophile is the serine 61. Lysine 64 (proton donor/acceptor) is an active-site residue. Residues 476–486 (RRSMDAPAPGD) form an important for specificity region. Aspartate 480 lines the substrate pocket.

This sequence belongs to the peptidase S12 family. As to quaternary structure, homodimer.

It carries out the reaction Release of an N-terminal D-amino acid from a peptide, Xaa-|-Yaa-, in which Xaa is preferably D-Ala, D-Ser or D-Thr. D-amino acid amides and methyl esters also are hydrolyzed, as is glycine amide.. Inhibited by beta-lactam compounds such as 6-aminopenicillic acid, 7-aminocephalosporanic acid, benzylpenicillin and ampicillin. Inhibited by p-chloromercuribenzoate. In terms of biological role, hydrolyzes N-terminal residues in D-amino acid-containing peptides. The sequence is that of D-aminopeptidase from Cereibacter sphaeroides (strain ATCC 17029 / ATH 2.4.9) (Rhodobacter sphaeroides).